The primary structure comprises 59 residues: Protein translocase subunit SecE (59 aa).

A helical transmembrane segment spans residues 37–57; the sequence is GIGIIIIGVIGFIISIIAQLL.

Belongs to the SecE/SEC61-gamma family. Component of the Sec protein translocase complex. Heterotrimer consisting of SecY (alpha), SecG (beta) and SecE (gamma) subunits. The heterotrimers can form oligomers, although 1 heterotrimer is thought to be able to translocate proteins. Interacts with the ribosome. May interact with SecDF, and other proteins may be involved.

It localises to the cell membrane. Essential subunit of the Sec protein translocation channel SecYEG. Clamps together the 2 halves of SecY. May contact the channel plug during translocation. The polypeptide is Protein translocase subunit SecE (Methanothermobacter thermautotrophicus (strain ATCC 29096 / DSM 1053 / JCM 10044 / NBRC 100330 / Delta H) (Methanobacterium thermoautotrophicum)).